The following is a 117-amino-acid chain: Large ribosomal subunit protein bL19 (117 aa).

Belongs to the bacterial ribosomal protein bL19 family.

Functionally, this protein is located at the 30S-50S ribosomal subunit interface and may play a role in the structure and function of the aminoacyl-tRNA binding site. In Shewanella pealeana (strain ATCC 700345 / ANG-SQ1), this protein is Large ribosomal subunit protein bL19.